We begin with the raw amino-acid sequence, 974 residues long: Kinesin-like protein KIN-7A (974 aa).

The disordered stretch occupies residues 1 to 29 (MTIKTPGTPVSKMDRTPAVTPGGSSRSRE). Positions 31 to 353 (KIVVTVRLRP…LYFANRAKEV (323 aa)) constitute a Kinesin motor domain. 117 to 124 (GQTSSGKT) is an ATP binding site. 2 coiled-coil regions span residues 362–435 (VVSD…KGLN) and 565–603 (SANL…VMSL). 2 disordered regions span residues 605–649 (SNIS…PCSP) and 663–713 (NKAP…SSVN). Residues 616-628 (TKNHHHQSKKKKL) are compositionally biased toward basic residues. 2 stretches are compositionally biased toward polar residues: residues 638-649 (NRQNFLKSPCSP) and 666-682 (PQEN…TPQG). The span at 683 to 693 (SEKETPQKGEE) shows a compositional bias: basic and acidic residues.

This sequence belongs to the TRAFAC class myosin-kinesin ATPase superfamily. Kinesin family. KIN-7 subfamily. Phosphorylated at Thr-145, Thr-687 and Thr-703 by CDKAs and CDKBs. Phosphorylated NACK1 fails to mediate cytokinesis. Expressed in roots, flowers, pollen mother cells and embryos.

The protein resides in the cytoplasm. Its subcellular location is the cytoskeleton. It localises to the phragmoplast. Its function is as follows. Probable plus end-directed motor protein that functions in the NACK-PQR (ANP1-MKK6-MPK4) MAP kinase signaling pathway, which is essential for somatic cell cytokinesis, especially for the cell-plate formation and its expansion. Regulates the activity and the localization of ANP1, probably by association through the non-catalytic region of the kinase. Functionally redundant with NACK2 and essential to promote the progression of cytokinesis and for cellularization (formation of the cell plate) during microgametogenesis and megagametogenesis. This is Kinesin-like protein KIN-7A from Arabidopsis thaliana (Mouse-ear cress).